Consider the following 73-residue polypeptide: Translation initiation factor IF-1 3 (73 aa).

One can recognise an S1-like domain in the interval 1–72 (MAKEELVEFG…TKGRINYRHK (72 aa)).

Belongs to the IF-1 family. As to quaternary structure, component of the 30S ribosomal translation pre-initiation complex which assembles on the 30S ribosome in the order IF-2 and IF-3, IF-1 and N-formylmethionyl-tRNA(fMet); mRNA recruitment can occur at any time during PIC assembly.

It localises to the cytoplasm. Its function is as follows. One of the essential components for the initiation of protein synthesis. Stabilizes the binding of IF-2 and IF-3 on the 30S subunit to which N-formylmethionyl-tRNA(fMet) subsequently binds. Helps modulate mRNA selection, yielding the 30S pre-initiation complex (PIC). Upon addition of the 50S ribosomal subunit IF-1, IF-2 and IF-3 are released leaving the mature 70S translation initiation complex. This is Translation initiation factor IF-1 3 from Cupriavidus metallidurans (strain ATCC 43123 / DSM 2839 / NBRC 102507 / CH34) (Ralstonia metallidurans).